A 60-amino-acid polypeptide reads, in one-letter code: Antitoxin Dmd (60 aa).

In terms of assembly, can form a complex with non-cognate host toxins LsoA and RnlA.

In terms of biological role, antitoxin component of a potential type II toxin-antitoxin (TA) system. Acts as an antitoxin against host toxins RnlA and LsoA, preventing them from degrading T4 bacteriophage-derived mRNA and thus permitting successful virus infection. Stabilizes middle (8-10 minutes) and late (18 to 28 minutes) T4 gene transcripts. The protein is Antitoxin Dmd (dmd) of Escherichia coli (Bacteriophage T4).